We begin with the raw amino-acid sequence, 227 residues long: Cytidylate kinase (227 aa).

10-18 (GPASSGKST) provides a ligand contact to ATP.

Belongs to the cytidylate kinase family. Type 1 subfamily.

The protein resides in the cytoplasm. The enzyme catalyses CMP + ATP = CDP + ADP. The catalysed reaction is dCMP + ATP = dCDP + ADP. In Streptococcus mutans serotype c (strain ATCC 700610 / UA159), this protein is Cytidylate kinase.